The sequence spans 314 residues: tRNA pseudouridine synthase B (314 aa).

Catalysis depends on Asp-47, which acts as the Nucleophile.

This sequence belongs to the pseudouridine synthase TruB family. Type 1 subfamily.

The catalysed reaction is uridine(55) in tRNA = pseudouridine(55) in tRNA. Its function is as follows. Responsible for synthesis of pseudouridine from uracil-55 in the psi GC loop of transfer RNAs. The sequence is that of tRNA pseudouridine synthase B from Vibrio campbellii (strain ATCC BAA-1116).